The primary structure comprises 193 residues: Protein GrpE (193 aa).

Residues 1 to 40 (MTEENRPQPDQPELTVTSESSVQETGENKARTPEQEGEAM) are disordered. Residues 14–25 (LTVTSESSVQET) are compositionally biased toward polar residues.

It belongs to the GrpE family. As to quaternary structure, homodimer.

The protein resides in the cytoplasm. Participates actively in the response to hyperosmotic and heat shock by preventing the aggregation of stress-denatured proteins, in association with DnaK and GrpE. It is the nucleotide exchange factor for DnaK and may function as a thermosensor. Unfolded proteins bind initially to DnaJ; upon interaction with the DnaJ-bound protein, DnaK hydrolyzes its bound ATP, resulting in the formation of a stable complex. GrpE releases ADP from DnaK; ATP binding to DnaK triggers the release of the substrate protein, thus completing the reaction cycle. Several rounds of ATP-dependent interactions between DnaJ, DnaK and GrpE are required for fully efficient folding. This Nitrosospira multiformis (strain ATCC 25196 / NCIMB 11849 / C 71) protein is Protein GrpE.